Here is a 129-residue protein sequence, read N- to C-terminus: MVESSSSKTKFAQAHGRYIRGSASKVRRVLDQIRGRTYRDALIMLEFMPYRSTGPITKVLRSAVANAENNMGLDPASLVITRATADMAPSMKRYRPRAQGRAFAIKKQTCHISISVAPSSESTNSEASD.

Belongs to the universal ribosomal protein uL22 family. As to quaternary structure, part of the 50S ribosomal subunit.

In terms of biological role, this protein binds specifically to 23S rRNA; its binding is stimulated by other ribosomal proteins, e.g. L4, L17, and L20. It is important during the early stages of 50S assembly. It makes multiple contacts with different domains of the 23S rRNA in the assembled 50S subunit and ribosome. Its function is as follows. The globular domain of the protein is located near the polypeptide exit tunnel on the outside of the subunit, while an extended beta-hairpin is found that lines the wall of the exit tunnel in the center of the 70S ribosome. This is Large ribosomal subunit protein uL22 from Prochlorococcus marinus (strain MIT 9211).